The following is a 149-amino-acid chain: Transcriptional regulator MraZ (149 aa).

SpoVT-AbrB domains lie at 5–52 (ITTL…PLPE) and 81–124 (AEEC…DSMV).

Belongs to the MraZ family. As to quaternary structure, forms oligomers.

The protein localises to the cytoplasm. The protein resides in the nucleoid. This Nitrosococcus oceani (strain ATCC 19707 / BCRC 17464 / JCM 30415 / NCIMB 11848 / C-107) protein is Transcriptional regulator MraZ.